The chain runs to 372 residues: Bifunctional enzyme IspD/IspF (372 aa).

The interval 1-210 (MLDLSLIMLG…LNLNSPSNDI (210 aa)) is 2-C-methyl-D-erythritol 4-phosphate cytidylyltransferase. The interval 211 to 372 (FCGNGFDVHA…LKYFNWRNVL (162 aa)) is 2-C-methyl-D-erythritol 2,4-cyclodiphosphate synthase. A divalent metal cation contacts are provided by Asp217 and His219. 4-CDP-2-C-methyl-D-erythritol 2-phosphate contacts are provided by residues 217 to 219 (DVH) and 243 to 244 (HS). A divalent metal cation is bound at residue His251. 4-CDP-2-C-methyl-D-erythritol 2-phosphate is bound by residues 265–267 (DIG), 270–274 (YPDND), 341–344 (TTTE), Phe348, and Arg351.

This sequence in the N-terminal section; belongs to the IspD/TarI cytidylyltransferase family. IspD subfamily. The protein in the C-terminal section; belongs to the IspF family. It depends on a divalent metal cation as a cofactor.

The catalysed reaction is 2-C-methyl-D-erythritol 4-phosphate + CTP + H(+) = 4-CDP-2-C-methyl-D-erythritol + diphosphate. It carries out the reaction 4-CDP-2-C-methyl-D-erythritol 2-phosphate = 2-C-methyl-D-erythritol 2,4-cyclic diphosphate + CMP. The protein operates within isoprenoid biosynthesis; isopentenyl diphosphate biosynthesis via DXP pathway; isopentenyl diphosphate from 1-deoxy-D-xylulose 5-phosphate: step 2/6. It functions in the pathway isoprenoid biosynthesis; isopentenyl diphosphate biosynthesis via DXP pathway; isopentenyl diphosphate from 1-deoxy-D-xylulose 5-phosphate: step 4/6. Its function is as follows. Bifunctional enzyme that catalyzes the formation of 4-diphosphocytidyl-2-C-methyl-D-erythritol from CTP and 2-C-methyl-D-erythritol 4-phosphate (MEP) (IspD), and catalyzes the conversion of 4-diphosphocytidyl-2-C-methyl-D-erythritol 2-phosphate (CDP-ME2P) to 2-C-methyl-D-erythritol 2,4-cyclodiphosphate (ME-CPP) with a corresponding release of cytidine 5-monophosphate (CMP) (IspF). This chain is Bifunctional enzyme IspD/IspF, found in Campylobacter fetus subsp. fetus (strain 82-40).